Consider the following 288-residue polypeptide: ATP synthase gamma chain (288 aa).

It belongs to the ATPase gamma chain family. As to quaternary structure, F-type ATPases have 2 components, CF(1) - the catalytic core - and CF(0) - the membrane proton channel. CF(1) has five subunits: alpha(3), beta(3), gamma(1), delta(1), epsilon(1). CF(0) has three main subunits: a, b and c.

Its subcellular location is the cell inner membrane. Its function is as follows. Produces ATP from ADP in the presence of a proton gradient across the membrane. The gamma chain is believed to be important in regulating ATPase activity and the flow of protons through the CF(0) complex. This Vibrio parahaemolyticus serotype O3:K6 (strain RIMD 2210633) protein is ATP synthase gamma chain.